Reading from the N-terminus, the 80-residue chain is UPF0125 protein XF_2346 (80 aa).

Belongs to the UPF0125 (RnfH) family.

This chain is UPF0125 protein XF_2346, found in Xylella fastidiosa (strain 9a5c).